The following is a 255-amino-acid chain: Hydroxyacylglutathione hydrolase (255 aa).

Zn(2+)-binding residues include His-56, His-58, Asp-60, His-61, His-114, Asp-133, and His-171.

Belongs to the metallo-beta-lactamase superfamily. Glyoxalase II family. As to quaternary structure, monomer. It depends on Zn(2+) as a cofactor.

The enzyme catalyses an S-(2-hydroxyacyl)glutathione + H2O = a 2-hydroxy carboxylate + glutathione + H(+). The protein operates within secondary metabolite metabolism; methylglyoxal degradation; (R)-lactate from methylglyoxal: step 2/2. Its function is as follows. Thiolesterase that catalyzes the hydrolysis of S-D-lactoyl-glutathione to form glutathione and D-lactic acid. The sequence is that of Hydroxyacylglutathione hydrolase from Rhodopseudomonas palustris (strain BisB5).